The chain runs to 572 residues: Fatty acid amide hydrolase 1 (572 aa).

The signal sequence occupies residues methionine 1–alanine 14. Positions isoleucine 32–isoleucine 63 form a coiled coil. Active-site charge relay system residues include lysine 139 and serine 214. Substrate-binding positions include serine 214 and valine 235–serine 238. The active-site Acyl-ester intermediate is the serine 238.

This sequence belongs to the amidase family. As to expression, expressed in the pharynx, some pharyngeal neurons, the posterior intestine and anal depressor muscles.

The enzyme catalyses N-(5Z,8Z,11Z,14Z-eicosatetraenoyl)-ethanolamine + H2O = ethanolamine + (5Z,8Z,11Z,14Z)-eicosatetraenoate. The catalysed reaction is (9Z)-octadecenamide + H2O = (9Z)-octadecenoate + NH4(+). It carries out the reaction (5Z,8Z,11Z,14Z,17Z-eicosapentaenoyl) ethanolamine + H2O = (5Z,8Z,11Z,14Z,17Z)-eicosapentaenoate + ethanolamine. It catalyses the reaction N-(9Z-hexadecenoyl) ethanolamine + H2O = (9Z)-hexadecenoate + ethanolamine. The enzyme catalyses N-(9Z-octadecenoyl) ethanolamine + H2O = ethanolamine + (9Z)-octadecenoate. The catalysed reaction is N-octadecanoyl ethanolamine + H2O = octadecanoate + ethanolamine. It carries out the reaction N-docosanoyl-ethanolamine + H2O = docosanoate + ethanolamine. It catalyses the reaction N-(15Z-tetracosenoyl)-ethanolamine + H2O = (15Z)-tetracosenoate + ethanolamine. The enzyme catalyses N-hexadecanoylethanolamine + H2O = ethanolamine + hexadecanoate. The catalysed reaction is N-(9Z,12Z-octadecadienoyl)-ethanolamine + H2O = ethanolamine + (9Z,12Z)-octadecadienoate. It carries out the reaction (9Z)-octadecenoate + glycine = N-(9Z-octadecenoyl)glycine + H2O. It catalyses the reaction N-(5Z,8Z,11Z,14Z)-eicosatetraenoyl-glycine + H2O = (5Z,8Z,11Z,14Z)-eicosatetraenoate + glycine. The enzyme catalyses N-(5Z,8Z,11Z,14Z-eicosatetraenoyl)-L-serine + H2O = (5Z,8Z,11Z,14Z)-eicosatetraenoate + L-serine. Catalyzes the hydrolysis of endogenous amidated lipids like anandamide (AEA or N-(5Z,8Z,11Z,14Z-eicosatetraenoyl)-ethanolamine) and eicosapentaneoyl ethanolamide (EPEA or (5Z,8Z,11Z,14Z,17Z-eicosapentaenoyl) ethanolamine), as well as other fatty amides, to their corresponding fatty acids, thereby regulating the signaling functions of these molecules. EPEA promotes dauer formation and may constitute a signal of high nutrient availability. Breakdown of EPEA may promote lifespan extension when nutrient availability is high. Facilitates axon regeneration after injury by degradating inhibitory compounds such as AEA. FAAH cooperates with PM20D1 in the hydrolysis of amino acid-conjugated fatty acids such as N-fatty acyl glycine and N-fatty acyl-L-serine, thereby acting as a physiological regulator of specific subsets of intracellular, but not of extracellular, N-fatty acyl amino acids. The protein is Fatty acid amide hydrolase 1 of Caenorhabditis elegans.